The sequence spans 575 residues: Serine/threonine-protein kinase YPK1 (575 aa).

The interval methionine 1–proline 53 is disordered. Residues serine 23 to threonine 38 are compositionally biased toward low complexity. In terms of domain architecture, Protein kinase spans phenylalanine 245 to phenylalanine 500. ATP-binding positions include isoleucine 251–valine 259 and lysine 274. The active-site Proton acceptor is the aspartate 368. The 72-residue stretch at lysine 502–glycine 573 folds into the AGC-kinase C-terminal domain. A phosphoserine mark is found at serine 543 and serine 562.

The protein belongs to the protein kinase superfamily. AGC Ser/Thr protein kinase family. RAC subfamily.

The catalysed reaction is L-seryl-[protein] + ATP = O-phospho-L-seryl-[protein] + ADP + H(+). It carries out the reaction L-threonyl-[protein] + ATP = O-phospho-L-threonyl-[protein] + ADP + H(+). In terms of biological role, probable serine/threonine-protein kinase which may act in the sphingolipid-mediated signaling pathway. May act downstream of TORC2 (TOR complex 2) and PDK1 to regulate sphingolipid metabolism. In Cryptococcus neoformans var. grubii serotype A (strain H99 / ATCC 208821 / CBS 10515 / FGSC 9487) (Filobasidiella neoformans var. grubii), this protein is Serine/threonine-protein kinase YPK1.